The following is a 206-amino-acid chain: Protein 6b (206 aa).

The segment at 162-182 is disordered; sequence YTEQAEEEEEEEEEEEEEEVL. Residues 165–182 show a composition bias toward acidic residues; sequence QAEEEEEEEEEEEEEEVL.

In terms of biological role, involved in tumor formation and increases auxin and cytokinin effects in host plants. This Allorhizobium ampelinum (strain ATCC BAA-846 / DSM 112012 / S4) (Agrobacterium vitis (strain S4)) protein is Protein 6b (6b).